Reading from the N-terminus, the 238-residue chain is tRNA (guanine-N(7)-)-methyltransferase (238 aa).

Glu68, Glu93, Asp120, and Asp143 together coordinate S-adenosyl-L-methionine. Asp143 is an active-site residue. Substrate is bound by residues Lys147, Asp179, and 216 to 219; that span reads TKFE.

This sequence belongs to the class I-like SAM-binding methyltransferase superfamily. TrmB family.

It carries out the reaction guanosine(46) in tRNA + S-adenosyl-L-methionine = N(7)-methylguanosine(46) in tRNA + S-adenosyl-L-homocysteine. Its pathway is tRNA modification; N(7)-methylguanine-tRNA biosynthesis. In terms of biological role, catalyzes the formation of N(7)-methylguanine at position 46 (m7G46) in tRNA. This chain is tRNA (guanine-N(7)-)-methyltransferase, found in Shewanella sp. (strain MR-4).